The primary structure comprises 451 residues: Trigger factor (451 aa).

Residues 163–248 (GDIIDMEYTV…IKALYVNILP (86 aa)) form the PPIase FKBP-type domain.

It belongs to the FKBP-type PPIase family. Tig subfamily.

The protein resides in the cytoplasm. It catalyses the reaction [protein]-peptidylproline (omega=180) = [protein]-peptidylproline (omega=0). Its function is as follows. Involved in protein export. Acts as a chaperone by maintaining the newly synthesized protein in an open conformation. Functions as a peptidyl-prolyl cis-trans isomerase. This is Trigger factor from Leptospira borgpetersenii serovar Hardjo-bovis (strain JB197).